Consider the following 461-residue polypeptide: Vimentin (461 aa).

2 stretches are compositionally biased toward low complexity: residues 1-14 (MNRT…SSSS) and 35-52 (SSRQ…SYSV). The interval 1-52 (MNRTTSRQTTSSSSYKRMFGGEGRPSVGMARSTLSSRQYSSPVRSSRMSYSV) is disordered. The head stretch occupies residues 1 to 91 (MNRTTSRQTT…FALSDAINSE (91 aa)). The interval 92–127 (FKANRTNEKAEMQHLNDRFASYIDKVRFLEQQNKIL) is coil 1A. Positions 92 to 127 (FKANRTNEKAEMQHLNDRFASYIDKVRFLEQQNKIL) form a coiled coil. Residues 99–407 (EKAEMQHLND…KLLEGEESRI (309 aa)) enclose the IF rod domain. Residues 128–149 (LAELEQLKGKGASRIGDLYEDE) are linker 1. The stretch at 150-241 (MRDLRRQVDQ…KLHDEEVAEL (92 aa)) forms a coiled coil. The coil 1B stretch occupies residues 150-241 (MRDLRRQVDQ…KLHDEEVAEL (92 aa)). Residues 242-264 (QAQIQDQHVQIDMDVAKPDLTAA) form a linker 12 region. Positions 265–403 (LRDVRVQYET…ATYRKLLEGE (139 aa)) are coil 2. A coiled-coil region spans residues 299–403 (NRNTDAIRQA…ATYRKLLEGE (105 aa)). The segment at 404–461 (ESRITTPMPNFSSFNLRESMLEARPMIDNLSKKVVIKTIETRDGHVINESTQNHDDLE) is tail.

This sequence belongs to the intermediate filament family. In terms of assembly, homomer assembled from elementary dimers. One of the most prominent phosphoproteins in various cells of mesenchymal origin. Phosphorylation is enhanced during cell division, at which time vimentin filaments are significantly reorganized.

It is found in the cytoplasm. It localises to the cytoskeleton. The protein resides in the nucleus matrix. In terms of biological role, vimentins are class-III intermediate filaments found in various non-epithelial cells, especially mesenchymal cells. Vimentin is attached to the nucleus, endoplasmic reticulum, and mitochondria, either laterally or terminally. The sequence is that of Vimentin (vim) from Oncorhynchus mykiss (Rainbow trout).